Consider the following 492-residue polypeptide: Regulatory protein ViaA (492 aa).

Belongs to the ViaA family. In terms of assembly, homodimer. Interacts with RavA.

The protein resides in the cytoplasm. In terms of biological role, component of the RavA-ViaA chaperone complex, which may act on the membrane to optimize the function of some of the respiratory chains. ViaA stimulates the ATPase activity of RavA. The chain is Regulatory protein ViaA from Pectobacterium carotovorum subsp. carotovorum (strain PC1).